The sequence spans 87 residues: Small ribosomal subunit protein bS16 (87 aa).

It belongs to the bacterial ribosomal protein bS16 family.

The sequence is that of Small ribosomal subunit protein bS16 from Ehrlichia chaffeensis (strain ATCC CRL-10679 / Arkansas).